The following is a 498-amino-acid chain: Phosphoethanolamine N-methyltransferase 1 (498 aa).

The S-adenosyl-L-homocysteine site is built by Gly68, Arg73, Asp89, Asp115, Val116, and Asn134. Phosphocholine is bound by residues Ser167, Ser172, Gly173, Arg177, and Tyr184. N-methylethanolamine phosphate-binding positions include 253-254 (QY) and Tyr262. Position 262 (Tyr262) interacts with phosphocholine. Val271, Ser272, Gly298, Asp320, Asp346, Cys347, and Arg363 together coordinate S-adenosyl-L-homocysteine. Residues Tyr394, Tyr408, Arg412, Tyr414, and Lys480 each contribute to the phosphocholine site. N-methylethanolamine phosphate-binding positions include Tyr394, Tyr408, 412-414 (RGY), and Lys480.

The protein belongs to the class I-like SAM-binding methyltransferase superfamily. PEAMT family.

It carries out the reaction phosphoethanolamine + S-adenosyl-L-methionine = N-methylethanolamine phosphate + S-adenosyl-L-homocysteine + H(+). It catalyses the reaction N-methylethanolamine phosphate + S-adenosyl-L-methionine = N,N-dimethylethanolamine phosphate + S-adenosyl-L-homocysteine + H(+). The catalysed reaction is N,N-dimethylethanolamine phosphate + S-adenosyl-L-methionine = phosphocholine + S-adenosyl-L-homocysteine + H(+). Its pathway is phospholipid metabolism; phosphatidylcholine biosynthesis; phosphocholine from phosphoethanolamine: step 1/1. With respect to regulation, inhibited by phosphatidic acid. In terms of biological role, involved in phosphocholine biosynthesis. Catalyzes the N-methylation of phosphoethanolamine, phosphomonomethylethanolamine and phosphodimethylethanolamine, the three methylation steps required to convert phosphoethanolamine to phosphocholine (PC). In Triticum aestivum (Wheat), this protein is Phosphoethanolamine N-methyltransferase 1.